The chain runs to 677 residues: Fermitin family homolog 1 (677 aa).

One can recognise an FERM domain in the interval 96–653 (MLRLRLPNAK…HEYIGGYIFL (558 aa)). The segment at 157–181 (KEPVIEDILNLESSSTSSGSPVSPG) is disordered. Residues 169 to 181 (SSSTSSGSPVSPG) are compositionally biased toward low complexity. Serine 170 and serine 179 each carry phosphoserine. A PH domain is found at 377-473 (KLFRPKKLML…WMAACILASK (97 aa)).

This sequence belongs to the kindlin family. As to quaternary structure, interacts with the cytoplasmic domain of integrins ITGB1 and ITGB3.

It is found in the cytoplasm. The protein localises to the cytoskeleton. Its subcellular location is the cell junction. The protein resides in the focal adhesion. It localises to the cell projection. It is found in the ruffle membrane. In terms of biological role, involved in cell adhesion. Contributes to integrin activation. When coexpressed with talin, potentiates activation of ITGA2B. Required for normal keratinocyte proliferation. Required for normal polarization of basal keratinocytes in skin, and for normal cell shape. Required for normal adhesion of keratinocytes to fibronectin and laminin, and for normal keratinocyte migration to wound sites. This Mus musculus (Mouse) protein is Fermitin family homolog 1 (Fermt1).